Here is a 526-residue protein sequence, read N- to C-terminus: Catalase (526 aa).

Positions 1–22 (MADDREKSTDQMKLWKEGRGSQ) are enriched in basic and acidic residues. Residues 1–29 (MADDREKSTDQMKLWKEGRGSQRPDVLTT) are disordered. Active-site residues include H75 and N148. Residues H194, S201, R203, N213, K237, W303, H305, and K306 each coordinate NADP(+). Y358 provides a ligand contact to heme.

The protein belongs to the catalase family. In terms of assembly, homotetramer. Heme is required as a cofactor. NADP(+) serves as cofactor.

The protein localises to the peroxisome matrix. The catalysed reaction is 2 H2O2 = O2 + 2 H2O. Catalyzes the degradation of hydrogen peroxide (H(2)O(2)) generated by peroxisomal oxidases to water and oxygen, thereby protecting cells from the toxic effects of hydrogen peroxide. The chain is Catalase (cat) from Danio rerio (Zebrafish).